The sequence spans 507 residues: AMSH-like ubiquitin thioesterase 1 (507 aa).

Positions Leu-333 to Met-463 constitute an MPN domain. The Zn(2+) site is built by His-411, His-413, Asp-424, His-426, Cys-469, His-475, and His-477. The short motif at His-411–Asp-424 is the JAMM motif element.

The protein belongs to the peptidase M67C family. It depends on Zn(2+) as a cofactor.

The protein localises to the membrane. Its subcellular location is the cytoplasm. In terms of biological role, zinc metalloprotease that cleaves 'Lys-48'- and 'Lys-63'-linked polyubiquitin chains. This chain is AMSH-like ubiquitin thioesterase 1 (AMSH1), found in Arabidopsis thaliana (Mouse-ear cress).